We begin with the raw amino-acid sequence, 274 residues long: MYRVFDKLASRPFVSLPGIQLIAKMPLSDLNKLPPLADQLEQAKRIAAYRAVDENFDAKTHKVVGVGSGTTVVYVAERLGEYMDEKTNFVCIPTGFQSKQLILSNKLQLGVIEQFPEVDIAFDGADEVDAGLQLIKGGGACLFQEKLVSTSAKKFIVVADSRKKSPKYLGTNWKKGVPIEVVPSSYVRVLSDLKNKLNCKSAMVRQGGSAKAGPVVTDNCNFIIDADFGEITDPRKLHQDIKLLVGVVETGLFIDNAEKAYFGYPDGSVDLQEL.

Belongs to the ribose 5-phosphate isomerase family.

It localises to the cytoplasm. It catalyses the reaction aldehydo-D-ribose 5-phosphate = D-ribulose 5-phosphate. It participates in carbohydrate degradation; pentose phosphate pathway; D-ribose 5-phosphate from D-ribulose 5-phosphate (non-oxidative stage): step 1/1. This is Ribose-5-phosphate isomerase (RKI1) from Kluyveromyces lactis (strain ATCC 8585 / CBS 2359 / DSM 70799 / NBRC 1267 / NRRL Y-1140 / WM37) (Yeast).